The sequence spans 491 residues: Phosphatidylglycerol--prolipoprotein diacylglyceryl transferase (491 aa).

The next 3 membrane-spanning stretches (helical) occupy residues 24–44 (IPLRAYALCIILGIVVAIWWG), 58–78 (VLDVAMFAVPFGLIGGRAYHV), and 98–118 (IWQGGLGIWGAVFLGGIGAWI). Arg146 contacts a 1,2-diacyl-sn-glycero-3-phospho-(1'-sn-glycerol). A run of 2 helical transmembrane segments spans residues 192 to 212 (IVHPTFLYELLWNVLVVIALV) and 256 to 276 (INNFTSALVFLAAIAYFVFAT). Residues 309 to 323 (NGPAEPGATASTATD) show a composition bias toward low complexity. The segment at 309-491 (NGPAEPGATA…DRVDSGENDA (183 aa)) is disordered. Over residues 347–360 (KGDRGTADAADTAK) the composition is skewed to basic and acidic residues. 3 stretches are compositionally biased toward low complexity: residues 361–387 (DASATDSASNSASATDSDFGETAGSSD), 394–406 (AVKAASGATAAEK), and 415–438 (AGEAAADTSAADQPAADKSGSAKS). Residues 453 to 462 (NESESTRDNE) show a composition bias toward basic and acidic residues. The span at 463-481 (STSAGTAASATGSAGAGAT) shows a compositional bias: low complexity. Over residues 482 to 491 (DRVDSGENDA) the composition is skewed to basic and acidic residues.

This sequence belongs to the Lgt family.

The protein resides in the cell membrane. It carries out the reaction L-cysteinyl-[prolipoprotein] + a 1,2-diacyl-sn-glycero-3-phospho-(1'-sn-glycerol) = an S-1,2-diacyl-sn-glyceryl-L-cysteinyl-[prolipoprotein] + sn-glycerol 1-phosphate + H(+). It functions in the pathway protein modification; lipoprotein biosynthesis (diacylglyceryl transfer). In terms of biological role, catalyzes the transfer of the diacylglyceryl group from phosphatidylglycerol to the sulfhydryl group of the N-terminal cysteine of a prolipoprotein, the first step in the formation of mature lipoproteins. The polypeptide is Phosphatidylglycerol--prolipoprotein diacylglyceryl transferase (Nocardia farcinica (strain IFM 10152)).